The sequence spans 120 residues: Large ribosomal subunit protein bL12 (120 aa).

Belongs to the bacterial ribosomal protein bL12 family. In terms of assembly, homodimer. Part of the ribosomal stalk of the 50S ribosomal subunit. Forms a multimeric L10(L12)X complex, where L10 forms an elongated spine to which 2 to 4 L12 dimers bind in a sequential fashion. Binds GTP-bound translation factors.

Its function is as follows. Forms part of the ribosomal stalk which helps the ribosome interact with GTP-bound translation factors. Is thus essential for accurate translation. The polypeptide is Large ribosomal subunit protein bL12 (Aeromonas salmonicida (strain A449)).